A 382-amino-acid polypeptide reads, in one-letter code: Succinate--CoA ligase [ADP-forming] subunit beta (382 aa).

The ATP-grasp domain occupies 9–240 (KELFSKYGVK…PRDVTEFEAY (232 aa)). Residues K45, 52-54 (GRG), V94, and E99 contribute to the ATP site. Positions 193 and 207 each coordinate Mg(2+). Residues N260 and 317 to 319 (GIT) each bind substrate.

The protein belongs to the succinate/malate CoA ligase beta subunit family. As to quaternary structure, heterotetramer of two alpha and two beta subunits. It depends on Mg(2+) as a cofactor.

It carries out the reaction succinate + ATP + CoA = succinyl-CoA + ADP + phosphate. It catalyses the reaction GTP + succinate + CoA = succinyl-CoA + GDP + phosphate. It participates in carbohydrate metabolism; tricarboxylic acid cycle; succinate from succinyl-CoA (ligase route): step 1/1. Functionally, succinyl-CoA synthetase functions in the citric acid cycle (TCA), coupling the hydrolysis of succinyl-CoA to the synthesis of either ATP or GTP and thus represents the only step of substrate-level phosphorylation in the TCA. The beta subunit provides nucleotide specificity of the enzyme and binds the substrate succinate, while the binding sites for coenzyme A and phosphate are found in the alpha subunit. This is Succinate--CoA ligase [ADP-forming] subunit beta from Pyrobaculum aerophilum (strain ATCC 51768 / DSM 7523 / JCM 9630 / CIP 104966 / NBRC 100827 / IM2).